Here is a 296-residue protein sequence, read N- to C-terminus: 4-hydroxy-tetrahydrodipicolinate synthase (296 aa).

Pyruvate is bound at residue threonine 49. Tyrosine 137 acts as the Proton donor/acceptor in catalysis. Lysine 166 serves as the catalytic Schiff-base intermediate with substrate. Pyruvate is bound at residue isoleucine 208.

The protein belongs to the DapA family. Homotetramer; dimer of dimers.

The protein localises to the cytoplasm. The catalysed reaction is L-aspartate 4-semialdehyde + pyruvate = (2S,4S)-4-hydroxy-2,3,4,5-tetrahydrodipicolinate + H2O + H(+). It functions in the pathway amino-acid biosynthesis; L-lysine biosynthesis via DAP pathway; (S)-tetrahydrodipicolinate from L-aspartate: step 3/4. In terms of biological role, catalyzes the condensation of (S)-aspartate-beta-semialdehyde [(S)-ASA] and pyruvate to 4-hydroxy-tetrahydrodipicolinate (HTPA). This is 4-hydroxy-tetrahydrodipicolinate synthase from Chlorobium limicola (strain DSM 245 / NBRC 103803 / 6330).